We begin with the raw amino-acid sequence, 291 residues long: uncharacterized protein (291 aa).

NAD(+) contacts are provided by residues alanine 5–histidine 19 and threonine 97. The active site involves lysine 172. Position 240 (lysine 240) interacts with NAD(+).

It belongs to the HIBADH-related family.

This is an uncharacterized protein from Shewanella frigidimarina (strain NCIMB 400).